We begin with the raw amino-acid sequence, 339 residues long: MRVYYDRDADLNLIKSKKVAIIGYGSQGRAHALNLKDSGAQNVAIALKSGSATAKKAEADGFKVMTVAEAAAWADLMMMATPDELQADIYKAEIAGNIRDGAAIAFAHGLNVHFGLIEPKASVDVVMIAPKGPGHTVRGEYQKGGGVPCLVAVHQNASGNALDLALSYACGVGGGRSGIIETNFKEECETDLFGEQVVLCGGLVELIRAGFETLVEAGYAPEMAYFECLHEVKLIVDLIYEGGIANMNYSISNTAEWGEYVTGPRIITDETKAEMKRVLKDIQTGKFTSEWMQEYRSGAARFKGIRRVNDAHQIEEVGAKLRGMMPWIGKNKLVDKAKN.

The region spanning 1 to 182 (MRVYYDRDAD…GGGRSGIIET (182 aa)) is the KARI N-terminal Rossmann domain. NADP(+) contacts are provided by residues 24 to 27 (YGSQ), lysine 48, serine 51, threonine 53, and 83 to 86 (DELQ). Histidine 108 is a catalytic residue. Glycine 134 provides a ligand contact to NADP(+). Residues 183 to 328 (NFKEECETDL…AKLRGMMPWI (146 aa)) enclose the KARI C-terminal knotted domain. The Mg(2+) site is built by aspartate 191, glutamate 195, glutamate 227, and glutamate 231. Serine 252 contacts substrate.

It belongs to the ketol-acid reductoisomerase family. Mg(2+) is required as a cofactor.

The catalysed reaction is (2R)-2,3-dihydroxy-3-methylbutanoate + NADP(+) = (2S)-2-acetolactate + NADPH + H(+). The enzyme catalyses (2R,3R)-2,3-dihydroxy-3-methylpentanoate + NADP(+) = (S)-2-ethyl-2-hydroxy-3-oxobutanoate + NADPH + H(+). The protein operates within amino-acid biosynthesis; L-isoleucine biosynthesis; L-isoleucine from 2-oxobutanoate: step 2/4. It participates in amino-acid biosynthesis; L-valine biosynthesis; L-valine from pyruvate: step 2/4. Involved in the biosynthesis of branched-chain amino acids (BCAA). Catalyzes an alkyl-migration followed by a ketol-acid reduction of (S)-2-acetolactate (S2AL) to yield (R)-2,3-dihydroxy-isovalerate. In the isomerase reaction, S2AL is rearranged via a Mg-dependent methyl migration to produce 3-hydroxy-3-methyl-2-ketobutyrate (HMKB). In the reductase reaction, this 2-ketoacid undergoes a metal-dependent reduction by NADPH to yield (R)-2,3-dihydroxy-isovalerate. In Sinorhizobium fredii (strain NBRC 101917 / NGR234), this protein is Ketol-acid reductoisomerase (NADP(+)).